We begin with the raw amino-acid sequence, 495 residues long: Putative lon protease homolog (495 aa).

Residue 52 to 59 (GPPGVGKS) participates in ATP binding. A disordered region spans residues 471-495 (YSSETTGSQRDSTYNYANMDDRSYE). Residues 472–486 (SSETTGSQRDSTYNY) show a composition bias toward polar residues.

The protein belongs to the peptidase S16 family.

The protein is Putative lon protease homolog of Thermoplasma volcanium (strain ATCC 51530 / DSM 4299 / JCM 9571 / NBRC 15438 / GSS1).